The chain runs to 272 residues: Probable feruloyl esterase C (272 aa).

Positions 1–22 (MLPTILYSAILALSALTPSALA) are cleaved as a signal peptide.

The protein belongs to the faeC family.

It localises to the secreted. The catalysed reaction is feruloyl-polysaccharide + H2O = ferulate + polysaccharide.. Functionally, involved in degradation of plant cell walls. Hydrolyzes the feruloyl-arabinose ester bond in arabinoxylans, and the feruloyl-galactose ester bond in pectin. Active against paranitrophenyl-acetate, methyl ferulate and wheat arabinoxylan. This Aspergillus clavatus (strain ATCC 1007 / CBS 513.65 / DSM 816 / NCTC 3887 / NRRL 1 / QM 1276 / 107) protein is Probable feruloyl esterase C (faeC-1).